The following is an 87-amino-acid chain: MGEGVYVRLWFPKDITKILGEKRLEEEAKLLVAIELYREGIVSLGKAAEIADLSIREFLYELRRRNVPLNYDLEELQKDIDVVGELL.

The protein belongs to the UPF0175 family.

This chain is UPF0175 protein AF_0597, found in Archaeoglobus fulgidus (strain ATCC 49558 / DSM 4304 / JCM 9628 / NBRC 100126 / VC-16).